The sequence spans 154 residues: Aspartate carbamoyltransferase regulatory chain (154 aa).

Residues cysteine 109, cysteine 114, cysteine 138, and cysteine 141 each coordinate Zn(2+).

Belongs to the PyrI family. Contains catalytic and regulatory chains. It depends on Zn(2+) as a cofactor.

Functionally, involved in allosteric regulation of aspartate carbamoyltransferase. This is Aspartate carbamoyltransferase regulatory chain from Serratia proteamaculans (strain 568).